The sequence spans 560 residues: NAD-dependent malic enzyme (560 aa).

The Proton donor role is filled by Y100. NAD(+) is bound at residue R153. The active-site Proton acceptor is the K171. The a divalent metal cation site is built by E242, D243, and D266. NAD(+) is bound by residues D266 and N413.

It belongs to the malic enzymes family. In terms of assembly, homotetramer. Mg(2+) serves as cofactor. The cofactor is Mn(2+).

The enzyme catalyses (S)-malate + NAD(+) = pyruvate + CO2 + NADH. It catalyses the reaction oxaloacetate + H(+) = pyruvate + CO2. This is NAD-dependent malic enzyme from Psychrobacter cryohalolentis (strain ATCC BAA-1226 / DSM 17306 / VKM B-2378 / K5).